Reading from the N-terminus, the 232-residue chain is Lipid A 1-phosphatase (232 aa).

6 helical membrane passes run 10 to 30 (LFIT…PVGA), 42 to 62 (ELLT…LLFF), 80 to 100 (ALYV…SGLL), 136 to 156 (FPSG…LLFP), 160 to 180 (VAFI…GAHY), and 183 to 203 (DVIA…IVYA).

This sequence belongs to the lipid A LpxE 1-phosphatase family.

The protein resides in the cell inner membrane. Its pathway is bacterial outer membrane biogenesis; LPS lipid A biosynthesis. Probably removes the 1-phosphate moiety from lipid A species. Does not seem to act on other membrane components, nor does it dephosphorylate the 4'-phosphate group of lipid A and/or lipid A precursors. This Rhizobium etli (strain ATCC 51251 / DSM 11541 / JCM 21823 / NBRC 15573 / CFN 42) protein is Lipid A 1-phosphatase.